A 448-amino-acid chain; its full sequence is Amino-acid acetyltransferase (448 aa).

Residues 295–433 (EQIRRANIND…KQVLYNYQRR (139 aa)) enclose the N-acetyltransferase domain.

The protein belongs to the acetyltransferase family. ArgA subfamily. As to quaternary structure, homohexamer.

The protein localises to the cytoplasm. It carries out the reaction L-glutamate + acetyl-CoA = N-acetyl-L-glutamate + CoA + H(+). The protein operates within amino-acid biosynthesis; L-arginine biosynthesis; N(2)-acetyl-L-ornithine from L-glutamate: step 1/4. This Photorhabdus laumondii subsp. laumondii (strain DSM 15139 / CIP 105565 / TT01) (Photorhabdus luminescens subsp. laumondii) protein is Amino-acid acetyltransferase.